The sequence spans 131 residues: Profilin-3 (131 aa).

C13 and C115 are oxidised to a cystine. The short motif at 81–97 (AVIRGKKGSGGITIKKT) is the Involved in PIP2 interaction element. Residue T111 is modified to Phosphothreonine.

It belongs to the profilin family. Occurs in many kinds of cells as a complex with monomeric actin in a 1:1 ratio. Phosphorylated by MAP kinases.

The protein resides in the cytoplasm. It localises to the cytoskeleton. In terms of biological role, binds to actin and affects the structure of the cytoskeleton. At high concentrations, profilin prevents the polymerization of actin, whereas it enhances it at low concentrations. This chain is Profilin-3, found in Olea europaea (Common olive).